The sequence spans 106 residues: MASSGSGDPLDSKRGEAPFAQRIDPTREKLTPEQLHFMRQAQLAQWQKVLPRRRTRNIVTGLGIGALVLAIHGYTFYSISQERFLDELEDEAKAARARALARASGS.

A disordered region spans residues 1–28 (MASSGSGDPLDSKRGEAPFAQRIDPTRE). A2 bears the N-acetylalanine mark. The Mitochondrial matrix portion of the chain corresponds to 2–57 (ASSGSGDPLDSKRGEAPFAQRIDPTREKLTPEQLHFMRQAQLAQWQKVLPRRRTRN). Residues 58–80 (IVTGLGIGALVLAIHGYTFYSIS) form a helical membrane-spanning segment. Residues 78–104 (SISQERFLDELEDEAKAARARALARAS) are a coiled coil. The Mitochondrial intermembrane segment spans residues 81–106 (QERFLDELEDEAKAARARALARASGS).

Belongs to the COA3 family. In terms of assembly, along with COX14, core component of the MITRAC (mitochondrial translation regulation assembly intermediate of cytochrome c oxidase complex) complex. Interacts with MT-CO1/COX1, SMIM20, SURF1 and TIMM21.

It is found in the mitochondrion inner membrane. Functionally, core component of the MITRAC (mitochondrial translation regulation assembly intermediate of cytochrome c oxidase complex) complex, that regulates cytochrome c oxidase assembly. MITRAC complexes regulate both translation of mitochondrial encoded components and assembly of nuclear-encoded components imported in mitochondrion. Required for efficient translation of MT-CO1 and mitochondrial respiratory chain complex IV assembly. In Pongo abelii (Sumatran orangutan), this protein is Cytochrome c oxidase assembly factor 3 homolog, mitochondrial (COA3).